Consider the following 316-residue polypeptide: MGIFRWNYPESSVPGVWGETTSTIDWCEENYVVSPYIAEWSNTLTNSVFILSAIYTTYSAYKNKLEKRFLLIGFGYGLVGVGSWLFHMTLKYRFQLLDELPMIYAMCIPTWSLVCEAKEALLNGDNHKKVPLFEQIFIGVIIGLAVTTASILYVIYKNVDIHQILFGVQIVVVAATAGSLTYRYVHDPLAKRNLKASMALGAILFLSGYISWLLDIHYCSFWVHVRRSILALPLGVLLEPHGWWHILTGMGIYFYIVSLEHLRVITLNVSCNYQFIWRWKVFPELIWKGRKPSTRYSLELFGPYVEDQSIEVKKEK.

The Lumenal segment spans residues 1–36 (MGIFRWNYPESSVPGVWGETTSTIDWCEENYVVSPY). Cys-27 and Cys-219 form a disulfide bridge. An intramembrane segment occupies 37–57 (IAEWSNTLTNSVFILSAIYTT). Residues 58–68 (YSAYKNKLEKR) are Lumenal-facing. The stretch at 69 to 89 (FLLIGFGYGLVGVGSWLFHMT) is an intramembrane region. Residues 90-93 (LKYR) are Lumenal-facing. A helical transmembrane segment spans residues 94–114 (FQLLDELPMIYAMCIPTWSLV). The Cytoplasmic portion of the chain corresponds to 115 to 135 (CEAKEALLNGDNHKKVPLFEQ). A helical transmembrane segment spans residues 136–156 (IFIGVIIGLAVTTASILYVIY). Residues 157–160 (KNVD) are Lumenal-facing. Residues 161-181 (IHQILFGVQIVVVAATAGSLT) lie within the membrane without spanning it. Residues 182–195 (YRYVHDPLAKRNLK) lie on the Lumenal side of the membrane. The stretch at 196-216 (ASMALGAILFLSGYISWLLDI) is an intramembrane region. Residues 217 to 228 (HYCSFWVHVRRS) are Lumenal-facing. The helical transmembrane segment at 229–249 (ILALPLGVLLEPHGWWHILTG) threads the bilayer. Over 250 to 316 (MGIYFYIVSL…DQSIEVKKEK (67 aa)) the chain is Cytoplasmic.

It belongs to the alkaline ceramidase family.

Its subcellular location is the endoplasmic reticulum membrane. It catalyses the reaction N-hexanoyl-sphinganine + H2O = hexanoate + sphinganine. The catalysed reaction is sphinganine + hexadecanoate = N-hexadecanoylsphinganine + H2O. The enzyme catalyses N-hexadecanoyl-(4R)-hydroxysphinganine + H2O = (4R)-hydroxysphinganine + hexadecanoate. It carries out the reaction N-hexadecanoylsphing-4-enine + H2O = sphing-4-enine + hexadecanoate. It catalyses the reaction an N-acyl-(4R)-4-hydroxysphinganine + H2O = (4R)-hydroxysphinganine + a fatty acid. In terms of biological role, alkaline ceramidase that hydrolyzes phytoceramide and also dihydroceramide into phytosphingosine or dihydrosphingosine. Prefers phytoceramide. Also has reverse activity as acyl-CoA-independent ceramide synthase, catalyzing synthesis of phytoceramide and dihydroceramide from palmitic acid and phytosphingosine or dihydrosphingosine. Is not responsible for the breakdown of unsaturated ceramide. Preferentially uses very long chain fatty acids (C-24 and C-26) in vivo compared to C-16 in vitro. In Saccharomyces cerevisiae (strain ATCC 204508 / S288c) (Baker's yeast), this protein is Alkaline ceramidase YPC1 (YPC1).